The primary structure comprises 397 residues: Staphylopine export protein (397 aa).

Helical transmembrane passes span 12–32 (LYIL…FIPL), 38–58 (GATN…AMVF), 77–97 (IILI…LEGY), 102–122 (VMQG…IIDA), 134–154 (LYSL…VGIW), 158–178 (NISL…FFGY), 217–237 (GIIM…VPLY), 239–259 (VSLG…AVVA), 285–305 (LLVI…IIFY), 309–329 (ILIG…LSFV), 337–357 (MLLG…GALM), and 363–383 (LVGF…IMIM).

It belongs to the major facilitator superfamily.

It localises to the cell membrane. Involved in the export of the metallophore staphylopine. In Staphylococcus aureus (strain Mu50 / ATCC 700699), this protein is Staphylopine export protein.